Here is a 159-residue protein sequence, read N- to C-terminus: Ribosomal RNA large subunit methyltransferase H (159 aa).

S-adenosyl-L-methionine-binding positions include Leu76, Gly108, and 127–132; that span reads LSKMTY.

The protein belongs to the RNA methyltransferase RlmH family. Homodimer.

It localises to the cytoplasm. The enzyme catalyses pseudouridine(1915) in 23S rRNA + S-adenosyl-L-methionine = N(3)-methylpseudouridine(1915) in 23S rRNA + S-adenosyl-L-homocysteine + H(+). Specifically methylates the pseudouridine at position 1915 (m3Psi1915) in 23S rRNA. The chain is Ribosomal RNA large subunit methyltransferase H from Ruminiclostridium cellulolyticum (strain ATCC 35319 / DSM 5812 / JCM 6584 / H10) (Clostridium cellulolyticum).